The following is a 526-amino-acid chain: Triacylglycerol lipase OBL1 (526 aa).

A helical membrane pass occupies residues 79-99 (GHLTDFLLNFYYQNHGFLGIL). Residues 338–342 (GHSLG) carry the GXSXG motif. Serine 340 functions as the Nucleophile in the catalytic mechanism. Residues aspartate 404 and histidine 497 each act as charge relay system in the active site.

The protein belongs to the AB hydrolase superfamily. Lipase family.

It localises to the membrane. The catalysed reaction is a triacylglycerol + H2O = a diacylglycerol + a fatty acid + H(+). Functionally, acid lipase that can hydrolyze a range of triacylglycerols but is not active on phospholipids. In vitro, hydrolyzes triolein, trilinolein, triricinolein, tripalmitin, trilaurin and tricaprin. May play a role in the regulation of lipolysis in germinating seeds. In Ricinus communis (Castor bean), this protein is Triacylglycerol lipase OBL1.